The following is a 254-amino-acid chain: Germin-like protein 4-1 (254 aa).

The N-terminal stretch at 1–27 (MASRAFAAVFAAVALVVCSSVLPRALA) is a signal peptide. Cysteine 37 and cysteine 52 are joined by a disulfide. The 154-residue stretch at 67–220 (KALGVPGNTV…AFMIDKDQVD (154 aa)) folds into the Cupin type-1 domain. Positions 115, 117, 122, and 166 each coordinate Mn(2+).

It belongs to the germin family. As to quaternary structure, oligomer (believed to be a pentamer but probably hexamer).

Its subcellular location is the secreted. It localises to the extracellular space. It is found in the apoplast. Its function is as follows. May play a role in plant defense. Probably has no oxalate oxidase activity even if the active site is conserved. The protein is Germin-like protein 4-1 of Oryza sativa subsp. japonica (Rice).